Reading from the N-terminus, the 292-residue chain is MALLSPPSPPPPLPPLRRRPASPTLLAVATRPSSLLSLPHCHCGLPLPSTANARAYSRSSRRRRRVAASLGQDEPGVSDTAVAPEGEGDSEPPASSDGAAGDIASSAEQPEASPEDLEDIRQVKRVLELLQKNRDMTFGEVKLTIMIEDPRDIERKRLLGIEDPDEITRDDLADALVEVNEGRIPENRVALQLLAKEMTEWPDLEMEAPKKKSKPGKSVYAKATDTGIDPETAAKRLNIDWDSAADLDDEEEEDDETEVPSAVGYSALYLLTAFPVIIGISVVLILFYNSLQ.

A compositionally biased stretch (pro residues) spans 1–15; the sequence is MALLSPPSPPPPLPP. A chloroplast-targeting transit peptide spans 1 to 67; that stretch reads MALLSPPSPP…RSSRRRRRVA (67 aa). Disordered stretches follow at residues 1–119 and 206–225; these read MALL…DLED and MEAP…KATD. Low complexity-rich tracts occupy residues 49-58 and 94-107; these read STANARAYSR and ASSD…ASSA. Residues 267 to 287 form a helical membrane-spanning segment; sequence ALYLLTAFPVIIGISVVLILF.

This sequence belongs to the Y3IP1/CEST family.

It is found in the plastid. The protein localises to the chloroplast thylakoid membrane. Its function is as follows. Involved in light-induced chloroplast development and growth. Involved in the plant response to abiotic and photooxidative stresses. May be involved in the suppression of photooxidative damage. This chain is Protein CHLOROPLAST ENHANCING STRESS TOLERANCE, chloroplastic, found in Oryza sativa subsp. indica (Rice).